Here is a 555-residue protein sequence, read N- to C-terminus: Glucose-6-phosphate isomerase (555 aa).

Residues 169 to 170, 219 to 224, glutamine 364, glutamate 368, histidine 399, and lysine 521 contribute to the D-glucose 6-phosphate site; these read GS and SKTFTT. Glutamate 368 functions as the Proton donor in the catalytic mechanism. Catalysis depends on residues histidine 399 and lysine 521.

This sequence belongs to the GPI family. Homodimer.

Its subcellular location is the cytoplasm. It is found in the cytosol. The catalysed reaction is alpha-D-glucose 6-phosphate = beta-D-fructose 6-phosphate. It functions in the pathway carbohydrate degradation; glycolysis; D-glyceraldehyde 3-phosphate and glycerone phosphate from D-glucose: step 2/4. Functionally, in the cytoplasm, catalyzes the conversion of glucose-6-phosphate to fructose-6-phosphate, the second step in glycolysis, and the reverse reaction during gluconeogenesis. The chain is Glucose-6-phosphate isomerase (PGI1) from Candida glabrata (strain ATCC 2001 / BCRC 20586 / JCM 3761 / NBRC 0622 / NRRL Y-65 / CBS 138) (Yeast).